The sequence spans 125 residues: Ribonuclease P protein component (125 aa).

This sequence belongs to the RnpA family. Consists of a catalytic RNA component (M1 or rnpB) and a protein subunit.

It carries out the reaction Endonucleolytic cleavage of RNA, removing 5'-extranucleotides from tRNA precursor.. In terms of biological role, RNaseP catalyzes the removal of the 5'-leader sequence from pre-tRNA to produce the mature 5'-terminus. It can also cleave other RNA substrates such as 4.5S RNA. The protein component plays an auxiliary but essential role in vivo by binding to the 5'-leader sequence and broadening the substrate specificity of the ribozyme. The chain is Ribonuclease P protein component from Ruegeria pomeroyi (strain ATCC 700808 / DSM 15171 / DSS-3) (Silicibacter pomeroyi).